The chain runs to 277 residues: Reaction center protein L chain (277 aa).

A run of 3 helical transmembrane segments spans residues 30 to 52 (FYVGIFGVMTVFFALIGIALIAW), 84 to 106 (GGIWQWVSICATGAFVTWALREV), and 113 to 135 (GIGFHVPFAFSFAIFAYVTLVVI). The (7R,8Z)-bacteriochlorophyll b site is built by histidine 154 and histidine 174. A helical membrane pass occupies residues 173–195 (AHMIAITFFFTTCLALALHGGLV). Histidine 191 lines the Fe cation pocket. Phenylalanine 217 serves as a coordination point for a ubiquinone. A Fe cation-binding site is contributed by histidine 231. The chain crosses the membrane as a helical span at residues 233 to 255 (LGLFLALSAVFFSAVCMIISGPV).

It belongs to the reaction center PufL/M/PsbA/D family. As to quaternary structure, reaction center is composed of four bacteriochlorophylls, two bacteriopheophytins, two ubiquinones, one iron, and three highly hydrophobic polypeptide chains (designated L, M, and H).

The protein localises to the cellular chromatophore membrane. The reaction center is a membrane-bound complex that mediates the initial photochemical event in the electron transfer process of photosynthesis. This chain is Reaction center protein L chain (pufL), found in Rhodopseudomonas palustris (strain ATCC BAA-98 / CGA009).